Here is a 23-residue protein sequence, read N- to C-terminus: Dahlein-4.1 (23 aa).

In terms of tissue distribution, expressed by the skin dorsal glands.

It localises to the secreted. In terms of biological role, has no antimicrobial activity. The protein is Dahlein-4.1 of Ranoidea dahlii (Dahl's aquatic frog).